A 336-amino-acid polypeptide reads, in one-letter code: Holliday junction branch migration complex subunit RuvB (336 aa).

A large ATPase domain (RuvB-L) region spans residues 4–184 (ADRLISAGTT…FGIVQRLEFY (181 aa)). ATP contacts are provided by residues isoleucine 23, arginine 24, glycine 65, lysine 68, threonine 69, threonine 70, 131–133 (EDY), arginine 174, tyrosine 184, and arginine 221. Threonine 69 lines the Mg(2+) pocket. The segment at 185-255 (QVPDLQYIVS…IAAQALDMLN (71 aa)) is small ATPAse domain (RuvB-S). The segment at 258 to 336 (AEGFDYMDRK…HFGITPPEMP (79 aa)) is head domain (RuvB-H). DNA-binding residues include arginine 294, arginine 313, and arginine 318.

It belongs to the RuvB family. In terms of assembly, homohexamer. Forms an RuvA(8)-RuvB(12)-Holliday junction (HJ) complex. HJ DNA is sandwiched between 2 RuvA tetramers; dsDNA enters through RuvA and exits via RuvB. An RuvB hexamer assembles on each DNA strand where it exits the tetramer. Each RuvB hexamer is contacted by two RuvA subunits (via domain III) on 2 adjacent RuvB subunits; this complex drives branch migration. In the full resolvosome a probable DNA-RuvA(4)-RuvB(12)-RuvC(2) complex forms which resolves the HJ.

The protein resides in the cytoplasm. It catalyses the reaction ATP + H2O = ADP + phosphate + H(+). In terms of biological role, the RuvA-RuvB-RuvC complex processes Holliday junction (HJ) DNA during genetic recombination and DNA repair, while the RuvA-RuvB complex plays an important role in the rescue of blocked DNA replication forks via replication fork reversal (RFR). RuvA specifically binds to HJ cruciform DNA, conferring on it an open structure. The RuvB hexamer acts as an ATP-dependent pump, pulling dsDNA into and through the RuvAB complex. RuvB forms 2 homohexamers on either side of HJ DNA bound by 1 or 2 RuvA tetramers; 4 subunits per hexamer contact DNA at a time. Coordinated motions by a converter formed by DNA-disengaged RuvB subunits stimulates ATP hydrolysis and nucleotide exchange. Immobilization of the converter enables RuvB to convert the ATP-contained energy into a lever motion, pulling 2 nucleotides of DNA out of the RuvA tetramer per ATP hydrolyzed, thus driving DNA branch migration. The RuvB motors rotate together with the DNA substrate, which together with the progressing nucleotide cycle form the mechanistic basis for DNA recombination by continuous HJ branch migration. Branch migration allows RuvC to scan DNA until it finds its consensus sequence, where it cleaves and resolves cruciform DNA. The sequence is that of Holliday junction branch migration complex subunit RuvB from Shigella sonnei (strain Ss046).